We begin with the raw amino-acid sequence, 72 residues long: Translation initiation factor IF-1 (72 aa).

Residues M1–R72 enclose the S1-like domain.

Belongs to the IF-1 family. Component of the 30S ribosomal translation pre-initiation complex which assembles on the 30S ribosome in the order IF-2 and IF-3, IF-1 and N-formylmethionyl-tRNA(fMet); mRNA recruitment can occur at any time during PIC assembly.

Its subcellular location is the cytoplasm. One of the essential components for the initiation of protein synthesis. Stabilizes the binding of IF-2 and IF-3 on the 30S subunit to which N-formylmethionyl-tRNA(fMet) subsequently binds. Helps modulate mRNA selection, yielding the 30S pre-initiation complex (PIC). Upon addition of the 50S ribosomal subunit IF-1, IF-2 and IF-3 are released leaving the mature 70S translation initiation complex. The protein is Translation initiation factor IF-1 of Pseudomonas syringae pv. tomato (strain ATCC BAA-871 / DC3000).